The sequence spans 443 residues: Arginine biosynthesis bifunctional protein ArgJ, mitochondrial (443 aa).

Substrate-binding residues include threonine 179, lysine 206, threonine 217, glutamate 303, asparagine 438, and serine 443. Threonine 217 functions as the Nucleophile in the catalytic mechanism.

This sequence belongs to the ArgJ family. In terms of assembly, heterodimer of an alpha and a beta chain. In terms of processing, the alpha and beta chains are autoproteolytically processed from a single precursor protein within the mitochondrion.

The protein resides in the mitochondrion matrix. It carries out the reaction N(2)-acetyl-L-ornithine + L-glutamate = N-acetyl-L-glutamate + L-ornithine. The enzyme catalyses L-glutamate + acetyl-CoA = N-acetyl-L-glutamate + CoA + H(+). It participates in amino-acid biosynthesis; L-arginine biosynthesis; L-ornithine and N-acetyl-L-glutamate from L-glutamate and N(2)-acetyl-L-ornithine (cyclic): step 1/1. It functions in the pathway amino-acid biosynthesis; L-arginine biosynthesis; N(2)-acetyl-L-ornithine from L-glutamate: step 1/4. In terms of biological role, catalyzes two activities which are involved in the cyclic version of arginine biosynthesis: the synthesis of acetylglutamate from glutamate and acetyl-CoA, and of ornithine by transacetylation between acetylornithine and glutamate. This is Arginine biosynthesis bifunctional protein ArgJ, mitochondrial from Eremothecium gossypii (strain ATCC 10895 / CBS 109.51 / FGSC 9923 / NRRL Y-1056) (Yeast).